We begin with the raw amino-acid sequence, 286 residues long: 4-diphosphocytidyl-2-C-methyl-D-erythritol kinase (286 aa).

Residue Lys-12 is part of the active site. Pro-96–Ala-106 contributes to the ATP binding site. Asp-138 is an active-site residue.

Belongs to the GHMP kinase family. IspE subfamily.

It carries out the reaction 4-CDP-2-C-methyl-D-erythritol + ATP = 4-CDP-2-C-methyl-D-erythritol 2-phosphate + ADP + H(+). It participates in isoprenoid biosynthesis; isopentenyl diphosphate biosynthesis via DXP pathway; isopentenyl diphosphate from 1-deoxy-D-xylulose 5-phosphate: step 3/6. Catalyzes the phosphorylation of the position 2 hydroxy group of 4-diphosphocytidyl-2C-methyl-D-erythritol. The protein is 4-diphosphocytidyl-2-C-methyl-D-erythritol kinase of Nitratidesulfovibrio vulgaris (strain ATCC 29579 / DSM 644 / CCUG 34227 / NCIMB 8303 / VKM B-1760 / Hildenborough) (Desulfovibrio vulgaris).